Reading from the N-terminus, the 385-residue chain is Glycerol-3-phosphate dehydrogenase [NAD(+)] 1 (385 aa).

NAD(+) contacts are provided by residues 29–34 (GSGNWG), F121, K144, and A177. Position 144 (K144) interacts with substrate. Residue K232 is the Proton acceptor of the active site. NAD(+) contacts are provided by R296 and Q325. 296–297 (RN) provides a ligand contact to substrate. S376 is subject to Phosphoserine. The residue at position 382 (T382) is a Phosphothreonine.

This sequence belongs to the NAD-dependent glycerol-3-phosphate dehydrogenase family.

The protein resides in the cytoplasm. The enzyme catalyses sn-glycerol 3-phosphate + NAD(+) = dihydroxyacetone phosphate + NADH + H(+). The protein is Glycerol-3-phosphate dehydrogenase [NAD(+)] 1 (gpd1) of Schizosaccharomyces pombe (strain 972 / ATCC 24843) (Fission yeast).